Consider the following 366-residue polypeptide: Uroporphyrinogen decarboxylase (366 aa).

Residues 28–32 (RQAGR), Asp-78, Tyr-160, Thr-215, and His-333 each bind substrate.

Belongs to the uroporphyrinogen decarboxylase family. In terms of assembly, homodimer.

It localises to the cytoplasm. The enzyme catalyses uroporphyrinogen III + 4 H(+) = coproporphyrinogen III + 4 CO2. It participates in porphyrin-containing compound metabolism; protoporphyrin-IX biosynthesis; coproporphyrinogen-III from 5-aminolevulinate: step 4/4. Functionally, catalyzes the decarboxylation of four acetate groups of uroporphyrinogen-III to yield coproporphyrinogen-III. This chain is Uroporphyrinogen decarboxylase, found in Paraburkholderia xenovorans (strain LB400).